Here is an 838-residue protein sequence, read N- to C-terminus: Xyloglucanase (838 aa).

The first 19 residues, 1–19 (MKVSRVLALVLGAVIPAHA), serve as a signal peptide directing secretion. Asp53 acts as the Nucleophile in catalysis. 2 N-linked (GlcNAc...) asparagine glycosylation sites follow: Asn232 and Asn436. Residue Asp469 is the Proton donor of the active site. The interval 750-801 (GTGGTSSSTKQSSSSTSSASSSTTLRSSVVSTTRASTVTSSRTSSAAGPTGS) is disordered. Positions 754 to 797 (TSSSTKQSSSSTSSASSSTTLRSSVVSTTRASTVTSSRTSSAAG) are enriched in low complexity. The region spanning 802–838 (GVAGHYAQCGGIGWTGPTQCVAPYVCQKQNDYYYQCV) is the CBM1 domain.

This sequence belongs to the glycosyl hydrolase 74 family.

The catalysed reaction is Hydrolysis of (1-&gt;4)-D-glucosidic linkages in xyloglucans so as to successively remove oligosaccharides from the newly-formed chain end after endo-initiation on a polymer molecule.. Hydrolyzes the glucosidic bonds of unbranched Glc residues in tamarind seed xyloglucan, producing XXXG, XLXG, XXLG and XLLG. Has a low activity against beta-glucan and carboxymethylcellulose. Not active against Avicel, laminarin, xylan, galactomannan, linear and branched arabinans, galactan, polygalacturonic acid, starch, beta-D-Glcp, beta-D-cellobiose, beta-D-Galp, beta-D-Xylp, alpha-D-Xylp, alpha-L-Araf and alpha-L-Arap. The sequence is that of Xyloglucanase from Hypocrea jecorina (strain QM6a) (Trichoderma reesei).